We begin with the raw amino-acid sequence, 363 residues long: Spermidine/putrescine import ATP-binding protein PotA (363 aa).

The 232-residue stretch at 5–236 folds into the ABC transporter domain; it reads IKLKHVRKEY…PVNDFVARFI (232 aa). 38–45 is a binding site for ATP; the sequence is GPSGSGKT.

It belongs to the ABC transporter superfamily. Spermidine/putrescine importer (TC 3.A.1.11.1) family. The complex is composed of two ATP-binding proteins (PotA), two transmembrane proteins (PotB and PotC) and a solute-binding protein (PotD).

The protein localises to the cell membrane. The enzyme catalyses ATP + H2O + polyamine-[polyamine-binding protein]Side 1 = ADP + phosphate + polyamineSide 2 + [polyamine-binding protein]Side 1.. Functionally, part of the ABC transporter complex PotABCD involved in spermidine/putrescine import. Responsible for energy coupling to the transport system. The sequence is that of Spermidine/putrescine import ATP-binding protein PotA from Lactobacillus johnsonii (strain CNCM I-12250 / La1 / NCC 533).